Reading from the N-terminus, the 2315-residue chain is Receptor-type tyrosine-protein phosphatase zeta (2315 aa).

An N-terminal signal peptide occupies residues 1 to 24 (MRILKRFLACIQLLCVCRLDWANG). The Extracellular portion of the chain corresponds to 25–1636 (YYRQQRKLVE…LAEGLESEKK (1612 aa)). The 265-residue stretch at 36–300 (IGWSYTGALN…KFSRQVFSSY (265 aa)) folds into the Alpha-carbonic anhydrase domain. Intrachain disulfides connect Cys56-Cys240 and Cys133-Cys264. N-linked (GlcNAc...) asparagine glycans are attached at residues Asn105, Asn134, Asn223, Asn232, Asn324, and Asn381. A Fibronectin type-III domain is found at 314-413 (EPENVQADPE…LIVDMPTDNP (100 aa)). Disordered regions lie at residues 442–462 (IVNP…PQIS) and 477–507 (AKTN…SQPV). Residues 496-507 (PNTSLNSTSQPV) show a composition bias toward polar residues. N-linked (GlcNAc...) asparagine glycans are attached at residues Asn497, Asn501, and Asn552. The O-linked (Xyl...) (chondroitin sulfate) serine glycan is linked to Ser587. N-linked (GlcNAc...) asparagine glycans are attached at residues Asn602 and Asn629. The interval 628–650 (RNASEDSTSSGSEESLKDPSMEG) is disordered. A Phosphoserine; alternate modification is found at Ser637. A glycan (O-linked (Xyl...) (chondroitin sulfate) serine; alternate) is linked at Ser637. Phosphoserine is present on Ser639. Asn677 carries an N-linked (GlcNAc...) asparagine glycan. Residue Ser997 is glycosylated (O-linked (Xyl...) (chondroitin sulfate) serine). N-linked (GlcNAc...) asparagine glycans are attached at residues Asn1017, Asn1050, Asn1082, and Asn1122. Residues 1123–1138 (FSVQPTHTVSQASGDT) are compositionally biased toward polar residues. Disordered regions lie at residues 1123–1160 (FSVQ…SSEM), 1397–1523 (KATS…EEND), 1543–1572 (LTSD…SFAD), and 1584–1621 (AGDS…NSSH). Positions 1145–1159 (SANSEPASSDPASSE) are enriched in low complexity. Over residues 1417–1432 (EDGDTDDDGDDDDDDR) the composition is skewed to acidic residues. The span at 1450 to 1465 (ESQEKVMNDSDTHENS) shows a compositional bias: basic and acidic residues. N-linked (GlcNAc...) asparagine glycosylation occurs at Asn1457. 2 stretches are compositionally biased toward polar residues: residues 1466–1479 (LMDQ…SLSE) and 1487–1513 (VTSV…GLSQ). Residues Ser1549 and Ser1551 are each glycosylated (O-linked (Xyl...) (chondroitin sulfate) serine). 2 stretches are compositionally biased toward polar residues: residues 1554-1572 (GTSD…SFAD) and 1593-1606 (FPQS…SENS). N-linked (GlcNAc...) asparagine glycosylation occurs at Asn1562. N-linked (GlcNAc...) asparagine glycosylation occurs at Asn1618. Residues 1637–1662 (AVIPLVIVSALTFICLVVLVGILIYW) traverse the membrane as a helical segment. Over 1663–2315 (RKCFQTAHFY…NIAESLESLV (653 aa)) the chain is Cytoplasmic. Phosphothreonine occurs at positions 1684 and 1687. 2 consecutive Tyrosine-protein phosphatase domains span residues 1717 to 1992 (FTEE…LVEA) and 2023 to 2282 (LEKQ…ILSL). Residues Asp1901, 1933-1939 (CSAGVGR), and Gln1977 contribute to the substrate site. Residue Cys1933 is the Phosphocysteine intermediate of the active site. Residue Ser2055 is modified to Phosphoserine.

This sequence belongs to the protein-tyrosine phosphatase family. Receptor class 5 subfamily. In terms of assembly, the carbonic-anhydrase like domain interacts with CNTN1 (contactin). Interacts with PTN. Interaction with PTN promotes formation of homooligomers; oligomerization impairs phosphatase activity. Interacts (via chondroitin sulfate chains) with MDK (via C-terminal); this interaction is inhibited by PTN; this interaction promotes neuronal migration. In terms of tissue distribution, specifically expressed in the central nervous system, where it is localized in the Purkinje cell layer of the cerebellum, the dentate gyrus, and the subependymal layer of the anterior horn of the lateral ventricle. Developmentally regulated in the brain.

It localises to the cell membrane. The protein resides in the secreted. The enzyme catalyses O-phospho-L-tyrosyl-[protein] + H2O = L-tyrosyl-[protein] + phosphate. Protein tyrosine phosphatase that negatively regulates oligodendrocyte precursor proliferation in the embryonic spinal cord. Required for normal differentiation of the precursor cells into mature, fully myelinating oligodendrocytes. May play a role in protecting oligondendrocytes against apoptosis. May play a role in the establishment of contextual memory, probably via the dephosphorylation of proteins that are part of important signaling cascades. The chain is Receptor-type tyrosine-protein phosphatase zeta (PTPRZ1) from Homo sapiens (Human).